Here is an 83-residue protein sequence, read N- to C-terminus: ATP synthase subunit c, chloroplastic (83 aa).

2 consecutive transmembrane segments (helical) span residues 4–24 (IISAASVIAAGLAVGLAAIGP) and 57–77 (LAFMEALTIYGLVVALSLLFA).

Belongs to the ATPase C chain family. As to quaternary structure, F-type ATPases have 2 components, F(1) - the catalytic core - and F(0) - the membrane proton channel. F(1) has five subunits: alpha(3), beta(3), gamma(1), delta(1), epsilon(1). F(0) has four main subunits: a(1), b(1), b'(1) and c(10-14). The alpha and beta chains form an alternating ring which encloses part of the gamma chain. F(1) is attached to F(0) by a central stalk formed by the gamma and epsilon chains, while a peripheral stalk is formed by the delta, b and b' chains.

Its subcellular location is the plastid. It is found in the chloroplast thylakoid membrane. Its function is as follows. F(1)F(0) ATP synthase produces ATP from ADP in the presence of a proton or sodium gradient. F-type ATPases consist of two structural domains, F(1) containing the extramembraneous catalytic core and F(0) containing the membrane proton channel, linked together by a central stalk and a peripheral stalk. During catalysis, ATP synthesis in the catalytic domain of F(1) is coupled via a rotary mechanism of the central stalk subunits to proton translocation. Functionally, key component of the F(0) channel; it plays a direct role in translocation across the membrane. A homomeric c-ring of between 10-14 subunits forms the central stalk rotor element with the F(1) delta and epsilon subunits. The polypeptide is ATP synthase subunit c, chloroplastic (Galdieria sulphuraria (Red alga)).